The chain runs to 54 residues: Putative collagen-like domain-containing protein 065L (54 aa).

The interval 1 to 54 (MRGLEAPGAVGPTGPSGAPGSQGPDGDVGGMGPEGPKGDDGPVGPKGPQGAAIF) is disordered. The Collagen-like domain occupies 7–51 (PGAVGPTGPSGAPGSQGPDGDVGGMGPEGPKGDDGPVGPKGPQGA). Residues 26-35 (GDVGGMGPEG) are compositionally biased toward gly residues. A compositionally biased stretch (low complexity) spans 42 to 54 (PVGPKGPQGAAIF).

This Dryophytes versicolor (chameleon treefrog) protein is Putative collagen-like domain-containing protein 065L.